Here is a 436-residue protein sequence, read N- to C-terminus: GTPase Der (436 aa).

EngA-type G domains lie at 4–167 (PTIA…PNEY) and 175–351 (IKFS…ESQN). GTP contacts are provided by residues 10 to 17 (GRPNVGKS), 57 to 61 (DTGGI), 119 to 122 (NKVD), 181 to 188 (GRPNVGKS), 229 to 233 (DTAGM), and 294 to 297 (NKWD). The 85-residue stretch at 352 to 436 (TRIPSAVLND…PIHLIARKRK (85 aa)) folds into the KH-like domain.

It belongs to the TRAFAC class TrmE-Era-EngA-EngB-Septin-like GTPase superfamily. EngA (Der) GTPase family. Associates with the 50S ribosomal subunit.

Functionally, GTPase that plays an essential role in the late steps of ribosome biogenesis. The sequence is that of GTPase Der from Streptococcus pneumoniae (strain JJA).